Here is a 543-residue protein sequence, read N- to C-terminus: Biotinidase (543 aa).

Positions 1-41 are cleaved as a signal peptide; it reads MAHAHIQGGRRAKSRFVVCIMSGARSKLALFLCGCYVVALG. The 280-residue stretch at 72–351 folds into the CN hydrolase domain; the sequence is NPLALISRQE…VGLIGAENAT (280 aa). The active-site Proton acceptor is the E112. An N-linked (GlcNAc...) asparagine glycan is attached at N119. A glycan (N-linked (GlcNAc...) (complex) asparagine) is linked at N150. Residue N203 is glycosylated (N-linked (GlcNAc...) asparagine). K212 serves as the catalytic Proton donor. The Nucleophile role is filled by C245. N349, N402, and N489 each carry an N-linked (GlcNAc...) asparagine glycan.

The protein belongs to the carbon-nitrogen hydrolase superfamily. BTD/VNN family.

It is found in the secreted. The protein resides in the extracellular space. It carries out the reaction biocytin + H2O = biotin + L-lysine. The catalysed reaction is biotin amide + H2O = biotin + NH4(+). Functionally, catalytic release of biotin from biocytin, the product of biotin-dependent carboxylases degradation. The chain is Biotinidase from Homo sapiens (Human).